The sequence spans 504 residues: Probable periplasmic serine endoprotease DegP-like (504 aa).

The first 26 residues, 1–26 (MLKTTTVAGLAAVLLTTGLPAEVAQS), serve as a signal peptide directing secretion. Residues 102 to 118 (RADRWRDRRGPRGEGRL) show a composition bias toward basic and acidic residues. A disordered region spans residues 102–122 (RADRWRDRRGPRGEGRLRPRA). The serine protease stretch occupies residues 113–286 (RGEGRLRPRA…PASVAKDVVD (174 aa)). Active-site charge relay system residues include His-140, Asp-170, and Ser-244. Residues 242-244 (GNS) and 299-303 (LGVQI) contribute to the substrate site. PDZ domains follow at residues 287 to 378 (SLIK…LWRS) and 401 to 491 (ATGE…IEAQ). 2 disordered regions span residues 389–411 (GTLPSDAKEPAPATGEAQPDEGQ) and 428–447 (EDGKGVTIASVDPDSDAGDR).

The protein belongs to the peptidase S1C family.

The protein resides in the periplasm. It catalyses the reaction Acts on substrates that are at least partially unfolded. The cleavage site P1 residue is normally between a pair of hydrophobic residues, such as Val-|-Val.. Its function is as follows. Might be efficient in the degradation of transiently denatured and unfolded proteins which accumulate in the periplasm following stress conditions. This is Probable periplasmic serine endoprotease DegP-like (degP1) from Rhizobium meliloti (strain 1021) (Ensifer meliloti).